A 70-amino-acid chain; its full sequence is MPQEIKEVKDFLIKARRKDARAVKIKKNENNTKFKIRCSRYLYTLVVQDKEKAEKLKQSLPPGLQVKEVK.

It belongs to the eukaryotic ribosomal protein eL38 family.

In Aedes aegypti (Yellowfever mosquito), this protein is Large ribosomal subunit protein eL38 (RpL38).